Consider the following 317-residue polypeptide: Retinol dehydrogenase 16 (317 aa).

Phenylalanine 33 to leucine 57 contributes to the NAD(+) binding site. Substrate is bound at residue serine 164. The active-site Proton acceptor is tyrosine 176. The helical transmembrane segment at leucine 289–valine 309 threads the bilayer.

Belongs to the short-chain dehydrogenases/reductases (SDR) family. In terms of assembly, homodimer. Post-translationally, not N-glycosylated. Highly expressed in adult liver (at protein level). Detected in endometrium, liver and foreskin. Detected in the spineous layers of adult skin, and at lower levels in basal and granular skin layers. Detected in fetal liver and lung.

It localises to the microsome membrane. It is found in the endoplasmic reticulum membrane. It catalyses the reaction all-trans-retinol--[retinol-binding protein] + NAD(+) = all-trans-retinal--[retinol-binding protein] + NADH + H(+). It carries out the reaction all-trans-retinol + NAD(+) = all-trans-retinal + NADH + H(+). The catalysed reaction is 13-cis-retinol + NAD(+) = 13-cis-retinal + NADH + H(+). The enzyme catalyses 11-cis-retinol + NAD(+) = 11-cis-retinal + NADH + H(+). It catalyses the reaction 9-cis-retinol + NAD(+) = 9-cis-retinal + NADH + H(+). It carries out the reaction 5alpha-androstane-3alpha,17beta-diol + NAD(+) = 17beta-hydroxy-5alpha-androstan-3-one + NADH + H(+). The catalysed reaction is androsterone + NAD(+) = 5alpha-androstan-3,17-dione + NADH + H(+). It participates in cofactor metabolism; retinol metabolism. Its activity is regulated as follows. Inhibited by citral, perillyl alcohol, geraniol, farnesol and geranyl geraniol. Its function is as follows. Oxidoreductase with a preference for NAD. Oxidizes all-trans-retinol, 9-cis-retinol, 11-cis-retinol and 13-cis-retinol to the corresponding aldehydes. Has higher activity towards CRBP-bound retinol than with free retinol. Also oxidizes 3-alpha-hydroxysteroids. Oxidizes androstanediol and androsterone to dihydrotestosterone and androstanedione. Can also catalyze the reverse reaction. This Homo sapiens (Human) protein is Retinol dehydrogenase 16.